Consider the following 208-residue polypeptide: Methenyltetrahydrofolate cyclohydrolase (208 aa).

Residues 25 to 46 form a helical membrane-spanning segment; the sequence is GAAAISGAMGAALVSMVCNLTI.

The protein belongs to the cyclodeaminase/cyclohydrolase family. In terms of assembly, homodimer.

Its subcellular location is the membrane. The enzyme catalyses (6R)-5,10-methenyltetrahydrofolate + H2O = (6R)-10-formyltetrahydrofolate + H(+). It participates in one-carbon metabolism; formaldehyde assimilation via serine pathway. In terms of biological role, required for both C1 and C2 metabolism. This Methylorubrum extorquens (strain ATCC 14718 / DSM 1338 / JCM 2805 / NCIMB 9133 / AM1) (Methylobacterium extorquens) protein is Methenyltetrahydrofolate cyclohydrolase (fchA).